The primary structure comprises 216 residues: UPF0134 protein MPN_344 (216 aa).

Basic and acidic residues predominate over residues 47 to 62; the sequence is FTIIEDQQDRPDKPEE. 2 disordered regions span residues 47 to 104 and 194 to 216; these read FTII…PKPD and GKMD…LESK. The segment covering 68-78 has biased composition (pro residues); the sequence is IPKPPKPPKGP. Residues 83–93 are compositionally biased toward low complexity; it reads EPGQPGGPDDP.

The protein belongs to the UPF0134 family.

The polypeptide is UPF0134 protein MPN_344 (Mycoplasma pneumoniae (strain ATCC 29342 / M129 / Subtype 1) (Mycoplasmoides pneumoniae)).